Consider the following 365-residue polypeptide: Histidinol-phosphate aminotransferase (365 aa).

K220 carries the post-translational modification N6-(pyridoxal phosphate)lysine.

The protein belongs to the class-II pyridoxal-phosphate-dependent aminotransferase family. Histidinol-phosphate aminotransferase subfamily. Homodimer. The cofactor is pyridoxal 5'-phosphate.

It catalyses the reaction L-histidinol phosphate + 2-oxoglutarate = 3-(imidazol-4-yl)-2-oxopropyl phosphate + L-glutamate. It functions in the pathway amino-acid biosynthesis; L-histidine biosynthesis; L-histidine from 5-phospho-alpha-D-ribose 1-diphosphate: step 7/9. This chain is Histidinol-phosphate aminotransferase (hisC), found in Xylella fastidiosa (strain Temecula1 / ATCC 700964).